The primary structure comprises 1142 residues: Potassium channel subfamily T member 2 (1142 aa).

Residues 1-63 (MVDLESEVPP…KNQRSSLRIR (63 aa)) lie on the Cytoplasmic side of the membrane. The chain crosses the membrane as a helical span at residues 64 to 84 (LFNFSLKLLSCLLYIIRVLLE). The Extracellular segment spans residues 85–101 (KPSQGNDWSHIFWVNRS). Asparagine 99 carries an N-linked (GlcNAc...) asparagine glycan. The helical transmembrane segment at 102–122 (LPLWGLQVSVALISLFETILL) threads the bilayer. The Cytoplasmic portion of the chain corresponds to 123-137 (GYLSYKGNIWEQILR). A helical membrane pass occupies residues 138 to 158 (VPFILEIINAVPFIISIFWPT). Residues 159–160 (LR) lie on the Extracellular side of the membrane. Residues 161–173 (NLFVPVFLNCWLA) form a helical membrane-spanning segment. Over 174–198 (KHALENMINDLHRAIQRTQSAMFNQ) the chain is Cytoplasmic. Residues 199–219 (VLILISTLLCLIFTCICGIQH) form a helical membrane-spanning segment. Over 220–228 (LERIGKKLN) the chain is Extracellular. Positions 229–249 (LFDSLYFCIVTFSTVGFGDVT) form an intramembrane region, pore-forming. Residues 250–256 (PETWSSK) are Extracellular-facing. The chain crosses the membrane as a helical span at residues 257 to 277 (LFVVAMICVALVVLPIQFEQL). The Cytoplasmic portion of the chain corresponds to 278–1142 (AYLWMERQKS…VQDSREETQL (865 aa)). RCK N-terminal domains follow at residues 299–435 (EKHV…DHVV) and 725–865 (NKLI…CYSL). Disordered regions lie at residues 989-1044 (DTKD…EKIT) and 1118-1142 (PNSE…ETQL). Residues 1017 to 1037 (LRRKSMQWARRLSRKGPKHSG) show a composition bias toward basic residues. The span at 1118–1129 (PNSEPSRKNSIC) shows a compositional bias: polar residues.

The protein belongs to the potassium channel family. Calcium-activated (TC 1.A.1.3) subfamily. KCa4.2/KCNT2 sub-subfamily. Homotetramer. Forms heteromer with KCNT1; heteromeric channels differ from those of homomeric channels in their unitary conductance, kinetic behavior, subcellular localization, and response to activation of protein kinase C. Phosphorylated by protein kinase C. Phosphorylation of the C-terminal domain inhibits channel activity. As to expression, detected in brain, and at low levels in heart. Detected in brainstem, including auditory neurons such as the medial nucleus of the trapezoid body. Detected in the olfactory bulb, red nucleus, facial nucleus, pontine nucleus, oculomotor nucleus, substantia nigra, deep cerebellar nuclei, vestibular nucleus, and the thalamus. Detected in hippocampal CA1, CA2, and CA3 regions, the dentate gyrus, supraoptic nucleus, hypothalamus, dorsal root ganglion, and cortical layers II, III, and V. Detected in striatum cholinergic interneurons.

The protein resides in the cell membrane. The catalysed reaction is K(+)(in) = K(+)(out). With respect to regulation, are normally in a closed state unless activated by an increase in intracellular Na(+) and Cl(-). Inhibited upon stimulation of G-protein coupled receptors, such as CHRM1 and GRM1. There is conflicting data about the effect of ATP on KNCT2 channels activity. Intracellular ATP was initially report to inhibit the channel activity. However, others studies conclude that KNCT2 channels are not inhibited by intracellular ATP. Functionally, sodium-activated and chloride-activated potassium channel. Produces rapidly activating outward rectifier K(+) currents. Contributes to regulate neuronal excitability. This is Potassium channel subfamily T member 2 (Kcnt2) from Rattus norvegicus (Rat).